We begin with the raw amino-acid sequence, 2434 residues long: ATP-binding cassette sub-family A member 2 (2434 aa).

The N-linked (GlcNAc...) asparagine glycan is linked to N14. 2 helical membrane-spanning segments follow: residues P22–L42 and A54–C74. 3 N-linked (GlcNAc...) asparagine glycosylation sites follow: N89, N168, and N173. At Q271 the chain carries N5-methylglutamine. N305, N368, N379, N420, N432, N476, N484, N494, N530, N549, N590, N600, and N628 each carry an N-linked (GlcNAc...) asparagine glycan. Residues R354–S369 show a composition bias toward low complexity. The disordered stretch occupies residues R354 to D396. Residues T370–D396 show a composition bias toward polar residues. 6 helical membrane-spanning segments follow: residues F699–V719, V750–I770, V782–L802, A813–I833, A857–W877, and L893–I913. Residues V990–V1221 form the ABC transporter 1 domain. An ATP-binding site is contributed by G1024–T1031. Residues A1225–S1246 are disordered. Residues G1228 to S1246 are compositionally biased toward polar residues. Position 1238 is a phosphoserine (S1238). N1247 carries an N-linked (GlcNAc...) asparagine glycan. Phosphoserine is present on residues S1327 and S1331. Residues I1461–I1481 traverse the membrane as a helical segment. N-linked (GlcNAc...) asparagine glycans are attached at residues N1496, N1549, and N1557. A disordered region spans residues N1587–E1606. A compositionally biased stretch (pro residues) spans V1589–S1598. 3 N-linked (GlcNAc...) asparagine glycosylation sites follow: N1613, N1678, and N1776. A run of 5 helical transmembrane segments spans residues V1793–F1813, V1842–F1862, F1873–P1893, V1906–L1926, and G1992–Y2012. One can recognise an ABC transporter 2 domain in the interval V2051 to R2286. N2055 carries an N-linked (GlcNAc...) asparagine glycan. G2088–T2095 provides a ligand contact to ATP. T2411 carries the phosphothreonine modification.

It belongs to the ABC transporter superfamily. ABCA family. Post-translationally, N-glycosylated. Methylated at Gln-271 by N6AMT1. In terms of tissue distribution, expressed at high levels in brain, at moderate levels in heart, kidney and lung, and at low levels in skeletal muscle, stomach, spleen, colon and pancreas. Not detected in the liver or small intestine. In brain, highly expressed in white matter and detected in oligodendrocytes. Expressed in cerebellum as well as the anterior commissure. Expressed mainly in the white matter but is also scattered in gray matter throughout the whole brain. Expressed in myelinating cells of both ventral and dorsal restricted regions in newborn spinal cord. Expressed in non-myelin-forming as well as in myelin-forming Schwann cells in the sciatic nerve.

Its subcellular location is the endosome membrane. The protein localises to the lysosome membrane. Its function is as follows. Probable transporter, its natural substrate has not been found yet. May have a role in macrophage lipid metabolism and neural development. May play a role in myelination, perhaps as a transporter for certain kinds of myelin chemical components. May play an important role in gamma-secretase processing of APP and thus in amyloid-beta peptide generation. Regulates esterification of plasma membrane cholesterol by modulation of sphingolipid metabolism. In terms of biological role, probable lipid transporter that modulates cholesterol sequestration in the late endosome/lysosome by regulating the intracellular sphingolipid metabolism, in turn participates in cholesterol homeostasis. May alter the transbilayer distribution of ceramide in the intraluminal membrane lipid bilayer, favoring its retention in the outer leaflet that results in increased acid ceramidase activity in the late endosome/lysosome, facilitating ceramide deacylation to sphingosine leading to the sequestration of free cholesterol in lysosomes. In addition regulates amyloid-beta production either by activating a signaling pathway that regulates amyloid precursor protein transcription through the modulation of sphingolipid metabolism or through its role in gamma-secretase processing of APP. May play a role in myelin formation. This chain is ATP-binding cassette sub-family A member 2, found in Rattus norvegicus (Rat).